The sequence spans 742 residues: RING finger protein 145 homolog (742 aa).

Helical transmembrane passes span 109-129, 138-158, 178-198, 233-253, 285-305, 318-338, 368-388, 395-415, 438-458, 463-483, and 533-553; these read AAII…TLPL, HFLS…YVDL, HGFH…LLEV, ACTG…PSLI, ILEL…YVEL, ILLT…ALAV, SGYT…FLGM, ILLA…LFEI, ICIA…MLAL, IYTA…IGVI, and VKVG…IVNI. The RING-type; atypical zinc-finger motif lies at 592–630; the sequence is CAICFIEMKEEARITPCKHYFHGPCLRKWLAVKMVCPLC. Disordered regions lie at residues 642–684 and 722–742; these read KSSS…PGDM and AYES…ENNN. The span at 659–672 shows a compositional bias: acidic residues; it reads AAVEENPENPEEQP.

It localises to the membrane. The protein resides in the golgi apparatus. The protein localises to the cis-Golgi network. It is found in the trans-Golgi network. It carries out the reaction S-ubiquitinyl-[E2 ubiquitin-conjugating enzyme]-L-cysteine + [acceptor protein]-L-lysine = [E2 ubiquitin-conjugating enzyme]-L-cysteine + N(6)-ubiquitinyl-[acceptor protein]-L-lysine.. Its function is as follows. E3 ubiquitin ligase that catalyzes the direct transfer of ubiquitin from E2 ubiquitin-conjugating enzyme to a specific substrate. Acting downstream of probable Golgi transport protein eas-1, involved in inhibition of activation of transcription factor sbp-1, thereby playing a role in regulating AMsh glial cell size. This chain is RING finger protein 145 homolog, found in Caenorhabditis elegans.